We begin with the raw amino-acid sequence, 865 residues long: Ribosome biogenesis protein BOP1 homolog (865 aa).

Disordered stretches follow at residues 1–195 and 207–240; these read MVAN…LKLG and KTRG…EEDI. 3 stretches are compositionally biased toward acidic residues: residues 30–44, 57–79, and 87–159; these read LDES…ESDY, NEGE…DDVL, and DGEE…EEEA. Positions 160 to 180 are enriched in basic and acidic residues; the sequence is KENGKEKPAKAKAERKQREEQ. WD repeat units lie at residues 526–565, 567–607, 651–693, 696–734, 737–776, 780–819, and 835–865; these read GHTS…CIRT, PTGD…YMLV, THFR…SQVP, KSKG…MMKK, PGCK…KPYQ, IHNA…DLLQ, and VNDF…RLYT.

The protein belongs to the WD repeat BOP1/ERB1 family.

It is found in the nucleus. The protein localises to the nucleolus. It localises to the nucleoplasm. Its function is as follows. Required for maturation of ribosomal RNAs and formation of the large ribosomal subunit. The polypeptide is Ribosome biogenesis protein BOP1 homolog (Anopheles gambiae (African malaria mosquito)).